We begin with the raw amino-acid sequence, 111 residues long: Probable 4-amino-4-deoxy-L-arabinose-phosphoundecaprenol flippase subunit ArnE (111 aa).

Helical transmembrane passes span L38–L58, L61–A81, and P91–A111. The EamA domain occupies L40–S109.

This sequence belongs to the ArnE family. As to quaternary structure, heterodimer of ArnE and ArnF.

It is found in the cell inner membrane. The protein operates within bacterial outer membrane biogenesis; lipopolysaccharide biosynthesis. Translocates 4-amino-4-deoxy-L-arabinose-phosphoundecaprenol (alpha-L-Ara4N-phosphoundecaprenol) from the cytoplasmic to the periplasmic side of the inner membrane. The sequence is that of Probable 4-amino-4-deoxy-L-arabinose-phosphoundecaprenol flippase subunit ArnE from Salmonella newport (strain SL254).